Here is a 237-residue protein sequence, read N- to C-terminus: Sugar fermentation stimulation protein homolog (237 aa).

The protein belongs to the SfsA family.

The chain is Sugar fermentation stimulation protein homolog from Pseudomonas savastanoi pv. phaseolicola (strain 1448A / Race 6) (Pseudomonas syringae pv. phaseolicola (strain 1448A / Race 6)).